A 51-amino-acid polypeptide reads, in one-letter code: uncharacterized protein (51 aa).

Residues 10 to 29 (LFLYHPLFLLLLYIYLVLFI) form a helical membrane-spanning segment.

The protein resides in the plastid. The protein localises to the chloroplast membrane. This is an uncharacterized protein from Anthoceros angustus (Hornwort).